Reading from the N-terminus, the 118-residue chain is MNKKVEGLTKETEAANYLSEQGYQILARNYRCRLGEIDIVARENGYLVFVEVKYRTNVEKGFPEEAITIQKQRRITNTAKYYLLVNRLPESTPCRFDVVVMLKEEIRLIKNAFDAYGS.

The protein belongs to the UPF0102 family.

The polypeptide is UPF0102 protein Cphy_2398 (Lachnoclostridium phytofermentans (strain ATCC 700394 / DSM 18823 / ISDg) (Clostridium phytofermentans)).